Reading from the N-terminus, the 274-residue chain is NADPH-dependent 7-cyano-7-deazaguanine reductase (274 aa).

80–82 (VES) serves as a coordination point for substrate. Residue 82-83 (SK) coordinates NADPH. Cys181 acts as the Thioimide intermediate in catalysis. Catalysis depends on Asp188, which acts as the Proton donor. 220–221 (HE) contributes to the substrate binding site. An NADPH-binding site is contributed by 249–250 (RG).

Belongs to the GTP cyclohydrolase I family. QueF type 2 subfamily. Homodimer.

It localises to the cytoplasm. It catalyses the reaction 7-aminomethyl-7-carbaguanine + 2 NADP(+) = 7-cyano-7-deazaguanine + 2 NADPH + 3 H(+). It functions in the pathway tRNA modification; tRNA-queuosine biosynthesis. Its function is as follows. Catalyzes the NADPH-dependent reduction of 7-cyano-7-deazaguanine (preQ0) to 7-aminomethyl-7-deazaguanine (preQ1). The protein is NADPH-dependent 7-cyano-7-deazaguanine reductase of Burkholderia pseudomallei (strain 1106a).